The primary structure comprises 353 residues: Putative 3-oxoacyl-[acyl-carrier-protein] synthase 3 (353 aa).

Residues Cys-122, His-268, and Asn-299 contribute to the active site.

The protein belongs to the thiolase-like superfamily. FabH family. In terms of assembly, homodimer.

It localises to the cytoplasm. The enzyme catalyses malonyl-[ACP] + acetyl-CoA + H(+) = 3-oxobutanoyl-[ACP] + CO2 + CoA. It participates in lipid metabolism; fatty acid biosynthesis. In terms of biological role, may catalyze the condensation reaction of fatty acid synthesis by the addition to an acyl acceptor of two carbons from malonyl-ACP. The chain is Putative 3-oxoacyl-[acyl-carrier-protein] synthase 3 from Campylobacter jejuni subsp. jejuni serotype O:2 (strain ATCC 700819 / NCTC 11168).